Reading from the N-terminus, the 400-residue chain is Phosphoribosylamine--glycine ligase (400 aa).

One can recognise an ATP-grasp domain in the interval 99 to 303; that stretch reads KRFMKKYGIR…FVNAVLEGYR (205 aa). 125–186 is an ATP binding site; that stretch reads IKKFSPPYVI…DEFLAGNELS (62 aa). Residues glutamate 273 and asparagine 275 each contribute to the Mg(2+) site.

This sequence belongs to the GARS family. It depends on Mg(2+) as a cofactor. The cofactor is Mn(2+).

The enzyme catalyses 5-phospho-beta-D-ribosylamine + glycine + ATP = N(1)-(5-phospho-beta-D-ribosyl)glycinamide + ADP + phosphate + H(+). It participates in purine metabolism; IMP biosynthesis via de novo pathway; N(1)-(5-phospho-D-ribosyl)glycinamide from 5-phospho-alpha-D-ribose 1-diphosphate: step 2/2. The protein is Phosphoribosylamine--glycine ligase of Thermotoga maritima (strain ATCC 43589 / DSM 3109 / JCM 10099 / NBRC 100826 / MSB8).